Consider the following 244-residue polypeptide: Ubiquinone/menaquinone biosynthesis C-methyltransferase UbiE (244 aa).

S-adenosyl-L-methionine-binding positions include Thr-70, Asp-91, and 117–118 (DA).

The protein belongs to the class I-like SAM-binding methyltransferase superfamily. MenG/UbiE family.

It catalyses the reaction a 2-demethylmenaquinol + S-adenosyl-L-methionine = a menaquinol + S-adenosyl-L-homocysteine + H(+). The catalysed reaction is a 2-methoxy-6-(all-trans-polyprenyl)benzene-1,4-diol + S-adenosyl-L-methionine = a 5-methoxy-2-methyl-3-(all-trans-polyprenyl)benzene-1,4-diol + S-adenosyl-L-homocysteine + H(+). Its pathway is quinol/quinone metabolism; menaquinone biosynthesis; menaquinol from 1,4-dihydroxy-2-naphthoate: step 2/2. The protein operates within cofactor biosynthesis; ubiquinone biosynthesis. Functionally, methyltransferase required for the conversion of demethylmenaquinol (DMKH2) to menaquinol (MKH2) and the conversion of 2-polyprenyl-6-methoxy-1,4-benzoquinol (DDMQH2) to 2-polyprenyl-3-methyl-6-methoxy-1,4-benzoquinol (DMQH2). The protein is Ubiquinone/menaquinone biosynthesis C-methyltransferase UbiE of Laribacter hongkongensis (strain HLHK9).